Consider the following 293-residue polypeptide: ATP synthase gamma chain (293 aa).

This sequence belongs to the ATPase gamma chain family. F-type ATPases have 2 components, CF(1) - the catalytic core - and CF(0) - the membrane proton channel. CF(1) has five subunits: alpha(3), beta(3), gamma(1), delta(1), epsilon(1). CF(0) has three main subunits: a, b and c.

It localises to the cell inner membrane. In terms of biological role, produces ATP from ADP in the presence of a proton gradient across the membrane. The gamma chain is believed to be important in regulating ATPase activity and the flow of protons through the CF(0) complex. The polypeptide is ATP synthase gamma chain (Psychrobacter cryohalolentis (strain ATCC BAA-1226 / DSM 17306 / VKM B-2378 / K5)).